The sequence spans 1373 residues: DNA-directed RNA polymerase subunit beta'' (1373 aa).

Residues cysteine 220, cysteine 293, cysteine 300, and cysteine 303 each contribute to the Zn(2+) site.

It belongs to the RNA polymerase beta' chain family. RpoC2 subfamily. In terms of assembly, in plastids the minimal PEP RNA polymerase catalytic core is composed of four subunits: alpha, beta, beta', and beta''. When a (nuclear-encoded) sigma factor is associated with the core the holoenzyme is formed, which can initiate transcription. Zn(2+) serves as cofactor.

The protein localises to the plastid. The protein resides in the chloroplast. The enzyme catalyses RNA(n) + a ribonucleoside 5'-triphosphate = RNA(n+1) + diphosphate. Its function is as follows. DNA-dependent RNA polymerase catalyzes the transcription of DNA into RNA using the four ribonucleoside triphosphates as substrates. This chain is DNA-directed RNA polymerase subunit beta'', found in Lepidium virginicum (Virginia pepperweed).